A 342-amino-acid polypeptide reads, in one-letter code: Ketoreductase nvfG (342 aa).

This sequence belongs to the NAD(P)-dependent epimerase/dehydratase family. Dihydroflavonol-4-reductase subfamily.

Its pathway is secondary metabolite biosynthesis; terpenoid biosynthesis. Functionally, ketoreductase; part of the gene cluster that mediates the biosynthesis of novofumigatonin, a heavily oxygenated meroterpenoid containing a unique orthoester moiety. The first step of the pathway is the synthesis of 3,5-dimethylorsellinic acid (DMOA) by the polyketide synthase nvfA via condensation of one acetyl-CoA starter unit with 3 malonyl-CoA units and 2 methylations. DMOA is then converted to farnesyl-DMOA by the farnesyltransferase nvfB. Epoxydation by FAD-dependent monooxygenase nvfK, followed by a protonation-initiated cyclization catalyzed by the terpene cyclase nvfL leads to the production of asnavolin H. The short chain dehydrogenase nvfC then as a 3-OH dehydrogenase of asnovolin H to yield chemesin D. There are two branches to synthesize asnovolin A from chemesin D. In one branch, chemesin D undergoes Baeyer-Villiger oxidation by nvfH, methylation by nvfJ, and enoyl reduction by the nvfM D enoylreductase that reduces the double bond between C-5'and C-6', to form respectively asnovolin I, asnovolin K, and asnovolin A. In the other branch, the methylation precedes the Baeyer-Villiger oxidation and the enoyl reduction to yield asnovolin A via the asnovolin J intermediate. Asnovolin A is further converted to fumigatonoid A by the Fe(II)/2-oxoglutarate-dependent dioxygenase nvfI that catalyzes an endoperoxidation reaction. The alpha/beta hydrolase nvfD then acts as an epimerase that converts fumigatonoid A to its C-5' epimer, which then undergoes spontaneous or nvfD-catalyzed lactonization. The following step utilizes the ketoreductase nvfG to produce fumigatonoid B. The dioxygenase nvfE further converts fumigatonoid B into fumigatonoid C. Finally the Fe(II)/2-oxoglutarate-dependent dioxygenase nvfF catalyzes two rounds of oxidation to transform fumigatonoid C into the end product, novofumigatonin A. The sequence is that of Ketoreductase nvfG from Aspergillus novofumigatus (strain IBT 16806).